Here is a 307-residue protein sequence, read N- to C-terminus: Beta-lactamase (307 aa).

The N-terminal stretch at 1–26 is a signal peptide; that stretch reads MKLWFSTLKLKKAAAVLLFSCVALAG. A lipid anchor (N-palmitoyl cysteine) is attached at C27. Residue C27 is the site of S-diacylglycerol cysteine attachment. S86 functions as the Acyl-ester intermediate in the catalytic mechanism. The active-site Proton acceptor is the E182. 248-250 provides a ligand contact to substrate; the sequence is KTG.

It belongs to the class-A beta-lactamase family. Post-translationally, large exopenicillinase is the primary secretion product; it can be converted to small exopenicillinase.

Its subcellular location is the cell membrane. It carries out the reaction a beta-lactam + H2O = a substituted beta-amino acid. In Bacillus licheniformis, this protein is Beta-lactamase (penP).